We begin with the raw amino-acid sequence, 370 residues long: Cobalt-precorrin-5B C(1)-methyltransferase (370 aa).

Belongs to the CbiD family.

The enzyme catalyses Co-precorrin-5B + S-adenosyl-L-methionine = Co-precorrin-6A + S-adenosyl-L-homocysteine. It functions in the pathway cofactor biosynthesis; adenosylcobalamin biosynthesis; cob(II)yrinate a,c-diamide from sirohydrochlorin (anaerobic route): step 6/10. Functionally, catalyzes the methylation of C-1 in cobalt-precorrin-5B to form cobalt-precorrin-6A. This is Cobalt-precorrin-5B C(1)-methyltransferase from Pseudomonas syringae pv. syringae (strain B728a).